A 418-amino-acid polypeptide reads, in one-letter code: Probable serine hydroxymethyltransferase (418 aa).

Residues leucine 118 and 122-124 (GHL) contribute to the (6S)-5,6,7,8-tetrahydrofolate site. Lysine 226 is modified (N6-(pyridoxal phosphate)lysine). 351-353 (SPF) contacts (6S)-5,6,7,8-tetrahydrofolate.

This sequence belongs to the SHMT family. As to quaternary structure, homodimer. Pyridoxal 5'-phosphate serves as cofactor.

It localises to the cytoplasm. The catalysed reaction is (6R)-5,10-methylene-5,6,7,8-tetrahydrofolate + glycine + H2O = (6S)-5,6,7,8-tetrahydrofolate + L-serine. It participates in one-carbon metabolism; tetrahydrofolate interconversion. Functionally, catalyzes the reversible interconversion of serine and glycine with tetrahydrofolate (THF) serving as the one-carbon carrier. This reaction serves as the major source of one-carbon groups required for the biosynthesis of purines, thymidylate, methionine, and other important biomolecules. This Mesomycoplasma hyopneumoniae (strain J / ATCC 25934 / NCTC 10110) (Mycoplasma hyopneumoniae) protein is Probable serine hydroxymethyltransferase.